The following is a 297-amino-acid chain: Glutamyl-Q tRNA(Asp) synthetase (297 aa).

L-glutamate-binding positions include 9–13 and Glu45; that span reads RFAPS. Residues 12–22 carry the 'HIGH' region motif; it reads PSPTGPLHFGS. Zn(2+) contacts are provided by Cys101, Cys103, and Cys118. 2 residues coordinate L-glutamate: Tyr170 and Arg188. Positions 226–230 match the 'KMSKS' region motif; that stretch reads KLSKS. Lys229 is an ATP binding site.

This sequence belongs to the class-I aminoacyl-tRNA synthetase family. GluQ subfamily. The cofactor is Zn(2+).

In terms of biological role, catalyzes the tRNA-independent activation of glutamate in presence of ATP and the subsequent transfer of glutamate onto a tRNA(Asp). Glutamate is transferred on the 2-amino-5-(4,5-dihydroxy-2-cyclopenten-1-yl) moiety of the queuosine in the wobble position of the QUC anticodon. The sequence is that of Glutamyl-Q tRNA(Asp) synthetase from Xanthomonas campestris pv. campestris (strain 8004).